The following is an 874-amino-acid chain: Adhesion G-protein coupled receptor D1 (874 aa).

The N-terminal stretch at 1–25 (MEKLLRLCCWYSWLLLFYYNFQVRG) is a signal peptide. The Extracellular portion of the chain corresponds to 26-567 (VYSRSQDHPG…LARGHQVALS (542 aa)). In terms of domain architecture, Pentraxin (PTX) spans 79–276 (KGVTLLYYGR…ASPVMPTDAY (198 aa)). N90, N185, N282, N302, N319, N394, N476, N501, and N533 each carry an N-linked (GlcNAc...) asparagine glycan. The GAIN-B domain maps to 371–557 (QVTVEGSSAM…AILMQVVPLE (187 aa)). 2 disulfide bridges follow: C510–C539 and C527–C541. The GPS stretch occupies residues 510–557 (CAFLDFSSGEGVWSNHGCALTRGNLTYSVCRCTHLTNFAILMQVVPLE). Residues 546-554 (NFAILMQVV) are stachel. Q563 serves as a coordination point for 17beta-hydroxy-5alpha-androstan-3-one. Residues 568-590 (SISYVGCSLSVLCLVATLVTFAV) form a helical membrane-spanning segment. Residues 591–601 (LSSVSTIRNQR) lie on the Cytoplasmic side of the membrane. Residues 602–623 (YHIHANLSFAVLVAQVLLLISF) form a helical membrane-spanning segment. Residues 624 to 632 (RLEPGTTPC) are Extracellular-facing. C632 and C704 are joined by a disulfide. The helical transmembrane segment at 633–655 (QVMAVLLHYFFLSAFAWMLVEGL) threads the bilayer. Residues 656-673 (HLYSMVIKVFGSEDSKHR) are Cytoplasmic-facing. Residues 674–695 (YYYGMGWGFPLLICIISLSFAM) traverse the membrane as a helical segment. Residues 696 to 710 (DSYGTSNNCWLSLAS) are Extracellular-facing. A helical transmembrane segment spans residues 711-732 (GAIWAFVAPALFVIVVNIGILI). The Cytoplasmic portion of the chain corresponds to 733 to 757 (AVTRVISQISADNYKIHGDPSAFKL). The chain crosses the membrane as a helical span at residues 758-780 (TAKAVAVLLPILGTSWVFGVLAV). The Extracellular segment spans residues 781-783 (NGC). A helical transmembrane segment spans residues 784-810 (AVVFQYMFATLNSLQGLFIFLFHCLLN). Residue N795 coordinates 17beta-hydroxy-5alpha-androstan-3-one. The Cytoplasmic portion of the chain corresponds to 811 to 874 (SEVRAAFKHK…SAHRVDLSAV (64 aa)). The segment at 854 to 874 (TKLSPWDKSSHSAHRVDLSAV) is disordered. The segment covering 861–874 (KSSHSAHRVDLSAV) has biased composition (basic and acidic residues).

It belongs to the G-protein coupled receptor 2 family. Adhesion G-protein coupled receptor (ADGR) subfamily. Heterodimer of 2 chains generated by proteolytic processing; the large extracellular N-terminal fragment and the membrane-bound C-terminal fragment predominantly remain associated and non-covalently linked. Interacts with ESYT1; interaction takes place in absence of cytosolic calcium and inhibits the G protein-coupled receptor activity of ADGRD1. Post-translationally, autoproteolytically processed at the GPS region of the GAIN-B domain; this cleavage modulates receptor activity. Cleavage takes place early in the secretory pathway before N-glycosylation. Up-regulated in CD133(+) cell population of glioblastoma.

It is found in the cell membrane. Its activity is regulated as follows. Forms a heterodimer of 2 chains generated by proteolytic processing that remain associated through non-covalent interactions mediated by the GAIN-B domain. In the inactivated receptor, the Stachel sequence (also named stalk) is embedded in the GAIN-B domain, where it adopts a beta-strand conformation. On activation, the Stachel moves into the 7 transmembrane region and adopts a twisted hook-shaped configuration that forms contacts within the receptor, leading to coupling of a G-alpha protein, which activates signaling. The cleaved GAIN-B and N-terminal domains can then dissociate from the rest of the receptor. Interaction with ESYT1 in absence of cytosolic calcium inhibits the G protein-coupled receptor activity; interaction and inhibition is relieved when cytosolic calcium increases. Activated by AP503, a small molecule that activates ADGRD1 without activating androgen nuclear receptors: AP503 enhances muscle strength without eliciting androgenic adverse effects. Activated by the 8E3E8 antibody that targets the N-terminus. In terms of biological role, adhesion G-protein coupled receptor (aGPCR) for androgen hormone 5alpha-dihydrotestosterone (5alpha-DHT), also named 17beta-hydroxy-5alpha-androstan-3-one, the most potent hormone among androgens. Also activated by methenolone drug. Ligand binding causes a conformation change that triggers signaling via guanine nucleotide-binding proteins (G proteins) and modulates the activity of downstream effectors, such as adenylate cyclase. ADGRD1 is coupled to G(s) G proteins and mediates activation of adenylate cyclase activity. Acts as a 5alpha-DHT receptor in muscle cells, thereby increasing intracellular cyclic AMP (cAMP) levels and enhancing muscle strength. This chain is Adhesion G-protein coupled receptor D1, found in Homo sapiens (Human).